The chain runs to 456 residues: tRNA modification GTPase MnmE (456 aa).

Positions 24, 81, and 120 each coordinate (6S)-5-formyl-5,6,7,8-tetrahydrofolate. The region spanning 216 to 379 (GMTVVIAGRP…LREHLKACMG (164 aa)) is the TrmE-type G domain. Residue asparagine 226 participates in K(+) binding. GTP contacts are provided by residues 226-231 (NAGKSS), 245-251 (TEIAGTT), 270-273 (DTAG), 335-338 (NKAD), and 359-361 (SAR). Serine 230 contacts Mg(2+). K(+)-binding residues include threonine 245, isoleucine 247, and threonine 250. Residue threonine 251 coordinates Mg(2+). Lysine 456 is a (6S)-5-formyl-5,6,7,8-tetrahydrofolate binding site.

It belongs to the TRAFAC class TrmE-Era-EngA-EngB-Septin-like GTPase superfamily. TrmE GTPase family. In terms of assembly, homodimer. Heterotetramer of two MnmE and two MnmG subunits. Requires K(+) as cofactor.

The protein resides in the cytoplasm. Exhibits a very high intrinsic GTPase hydrolysis rate. Involved in the addition of a carboxymethylaminomethyl (cmnm) group at the wobble position (U34) of certain tRNAs, forming tRNA-cmnm(5)s(2)U34. This chain is tRNA modification GTPase MnmE, found in Pseudomonas syringae pv. syringae (strain B728a).